Here is a 275-residue protein sequence, read N- to C-terminus: Shikimate dehydrogenase (NADP(+)) (275 aa).

Shikimate contacts are provided by residues 15–17 (SKS) and T62. K66 serves as the catalytic Proton acceptor. E78 serves as a coordination point for NADP(+). Residues N87 and D102 each contribute to the shikimate site. Residues 127-131 (GAGGA), 151-156 (NRTPQK), and M215 contribute to the NADP(+) site. Y217 contributes to the shikimate binding site. G239 serves as a coordination point for NADP(+).

This sequence belongs to the shikimate dehydrogenase family. In terms of assembly, homodimer.

It catalyses the reaction shikimate + NADP(+) = 3-dehydroshikimate + NADPH + H(+). It participates in metabolic intermediate biosynthesis; chorismate biosynthesis; chorismate from D-erythrose 4-phosphate and phosphoenolpyruvate: step 4/7. Involved in the biosynthesis of the chorismate, which leads to the biosynthesis of aromatic amino acids. Catalyzes the reversible NADPH linked reduction of 3-dehydroshikimate (DHSA) to yield shikimate (SA). The protein is Shikimate dehydrogenase (NADP(+)) of Nitrosospira multiformis (strain ATCC 25196 / NCIMB 11849 / C 71).